Reading from the N-terminus, the 541-residue chain is RING finger protein 37 (541 aa).

Residues 258-338 (DVPEEFLDPI…DHFLLQHSIP (81 aa)) enclose the U-box domain. Asymmetric dimethylarginine is present on arginine 451. Residues 483–528 (CASCKRVFSPYFKKEPVYQLPCGHLLCRPCLGEKQRSLPMTCTACQ) form an RING-type zinc finger.

In terms of assembly, interacts with UBE2L3. Interacts with VCP. As to expression, expressed in liver, heart, brain, kidney and testis.

It is found in the nucleus. It carries out the reaction S-ubiquitinyl-[E2 ubiquitin-conjugating enzyme]-L-cysteine + [acceptor protein]-L-lysine = [E2 ubiquitin-conjugating enzyme]-L-cysteine + N(6)-ubiquitinyl-[acceptor protein]-L-lysine.. Its pathway is protein modification; protein ubiquitination. Its function is as follows. May have a ubiquitin-protein ligase activity acting as an E3 ubiquitin-protein ligase or as a ubiquitin-ubiquitin ligase promoting elongation of ubiquitin chains on substrates. The protein is RING finger protein 37 of Homo sapiens (Human).